The chain runs to 134 residues: Inner membrane protein YqjE (134 aa).

The Cytoplasmic portion of the chain corresponds to 1–55; the sequence is MADTHHAQGPGKSVLGIGQRIVSIMVEMVETRLRLAVVELEEEKANLFQLLLMLG. Residues 56–76 form a helical membrane-spanning segment; that stretch reads LTMLFAAFGLMSLMVLIIWAV. Over 77–83 the chain is Periplasmic; sequence DPQYRLN. Residues 84 to 104 form a helical membrane-spanning segment; the sequence is AMIATTVVLLLLALIGGIWTL. Over 105–134 the chain is Cytoplasmic; sequence RKSRKSTLLRHTRHELANDRQLLEEESREQ.

Its subcellular location is the cell inner membrane. In Escherichia coli O157:H7, this protein is Inner membrane protein YqjE (yqjE).